The chain runs to 488 residues: Glutamyl-tRNA(Gln) amidotransferase subunit A (488 aa).

Active-site charge relay system residues include Lys77 and Ser152. Catalysis depends on Ser176, which acts as the Acyl-ester intermediate.

The protein belongs to the amidase family. GatA subfamily. Heterotrimer of A, B and C subunits.

The catalysed reaction is L-glutamyl-tRNA(Gln) + L-glutamine + ATP + H2O = L-glutaminyl-tRNA(Gln) + L-glutamate + ADP + phosphate + H(+). Its function is as follows. Allows the formation of correctly charged Gln-tRNA(Gln) through the transamidation of misacylated Glu-tRNA(Gln) in organisms which lack glutaminyl-tRNA synthetase. The reaction takes place in the presence of glutamine and ATP through an activated gamma-phospho-Glu-tRNA(Gln). The sequence is that of Glutamyl-tRNA(Gln) amidotransferase subunit A from Streptococcus pyogenes serotype M3 (strain ATCC BAA-595 / MGAS315).